A 498-amino-acid polypeptide reads, in one-letter code: Glycerol kinase (498 aa).

Residue Thr12 coordinates ADP. ATP-binding residues include Thr12, Thr13, and Ser14. A sn-glycerol 3-phosphate-binding site is contributed by Thr12. Arg16 provides a ligand contact to ADP. Sn-glycerol 3-phosphate is bound by residues Arg82, Glu83, Tyr134, and Asp243. 5 residues coordinate glycerol: Arg82, Glu83, Tyr134, Asp243, and Gln244. Thr265 and Gly308 together coordinate ADP. Residues Thr265, Gly308, Gln312, and Gly409 each contribute to the ATP site. ADP-binding residues include Gly409 and Asn413.

The protein belongs to the FGGY kinase family. Homotetramer and homodimer (in equilibrium).

It catalyses the reaction glycerol + ATP = sn-glycerol 3-phosphate + ADP + H(+). It functions in the pathway polyol metabolism; glycerol degradation via glycerol kinase pathway; sn-glycerol 3-phosphate from glycerol: step 1/1. Its activity is regulated as follows. Activated by phosphorylation and inhibited by fructose 1,6-bisphosphate (FBP). Functionally, key enzyme in the regulation of glycerol uptake and metabolism. Catalyzes the phosphorylation of glycerol to yield sn-glycerol 3-phosphate. This is Glycerol kinase from Clostridium botulinum (strain 657 / Type Ba4).